A 467-amino-acid polypeptide reads, in one-letter code: ATP synthase subunit beta (467 aa).

Residue G156–T163 coordinates ATP.

Belongs to the ATPase alpha/beta chains family. In terms of assembly, F-type ATPases have 2 components, CF(1) - the catalytic core - and CF(0) - the membrane proton channel. CF(1) has five subunits: alpha(3), beta(3), gamma(1), delta(1), epsilon(1). CF(0) has three main subunits: a(1), b(2) and c(9-12). The alpha and beta chains form an alternating ring which encloses part of the gamma chain. CF(1) is attached to CF(0) by a central stalk formed by the gamma and epsilon chains, while a peripheral stalk is formed by the delta and b chains.

It localises to the cell inner membrane. The catalysed reaction is ATP + H2O + 4 H(+)(in) = ADP + phosphate + 5 H(+)(out). Its function is as follows. Produces ATP from ADP in the presence of a proton gradient across the membrane. The catalytic sites are hosted primarily by the beta subunits. This is ATP synthase subunit beta from Cupriavidus pinatubonensis (strain JMP 134 / LMG 1197) (Cupriavidus necator (strain JMP 134)).